We begin with the raw amino-acid sequence, 2601 residues long: MKRKVVNTHKLRLSPNEEAFILKEDYERRRKLRLLQVREQERDIALQIREDIKQRRNQQFTRLAEELRAEWEESQTQKIQNLEKLYLASLRSMGEGHRQAKENEPDLDALAQRAAERKRKADLRHKEALKVQKNQKEILLKQKTWHIKARKEALLVEKERSAKITSLPPPPPTLFENIEVKRISAVKTNSSTYHHLHTFVNRETDTKRPDARLAAEEEAKRLEELQKQAAQERMERFEKAHVRGFQAMKKIHLAQNQEKLMKELKQLQQEDLARRRQTVAQMPPQLVELPYKRSEMKEDWQRELEFAFEDMYNADRKVKGNLILHLEPEPLPTVTNQIQDEELDLSMEQENLGAAEDLPVTEAEICSSETDVPLVMKTQQIPSKVLFKKLLNKIRSQKSLWTIKSMSEDESEMITTVSEIESKAPTVESGTIASKERTLSSGQEQVVESDTLTIESGPLASEDKPLSCGTNSGKEQEINETLPITTVAQSSVLLHPQEAAARIRMSARQKQIMEIEEQKQKQLELLEQIEQQKLRLETDCFRAQLEEEKRKKTQPTGVGIAPASCPVISDEDSHRQMIRNYQHQLLQQNRLHRQSVETARKQLLEYQTMLKGRCPSVSAPSLITDSVISVPSWKSERPTAISEHWDQGQRLKLSPNKYQPIQPIQTSKLEQDHFQVARQNHFPQRQVETTETLRASDILTNQALESQEHLRQFSQTETQQRDYKLVPKDSETLSRALSHDRQLISQDARKISETFGATTFQSLESQQLFSENSENISYHLTEPSSFVPLVPQHSFSSLPVKVESGKIQEPFSAMSKSTVSTSHSIISQMHDRPLLPSENITAQQGNMKALQEQLDLQKKVLQATQEAQEQLLLCKQKEVEQQTGLSVFLPLVTPDSSALLPSAKADLGRIQESSPTKNNIAVSSDHHVISQLQDKRLSLSQPILSQQNNFKFLQEQLNIQKDSLQARREAQEVLYVHKQSELDRRVCSEQAEPSFPFQVAQHTFTSLPSADTKSGKIQEQHSSKSEKGLVSCQSDIPISQDGSLSFLQQFLPLHDSLKLLQEQLTKQRDTLQARHEAQVELLLHRQRDLGDSKSGLVSSSSSPVVVQHSVASQASAKAEPRRIQELYLSEKENVGPSCHLIIPTFQDKSLSFPQHSLAQQENLTILQEQSQIQRVILGAKEGTQEFVHTESELEKRISSEQTGTSSSLSQVDESERFQECISIKSDSTIPLSHPKIPRCQERLLRVSQHMLPLQDNLEEHQAWLDTEKEAFHFSQKTQENTSSEQTGSSSFIPQLVQLSFTSLASAESGTILEPLFTESESKIFSSHLQIPQLQDRLLRISQLIQPQQDNLKALQEQLATQREAIILARQEAREELLLHQSEWEGRISPEQVDTSSLPLVPQHSFASLPLNESERNQEPCSINSDNIVSSGHSEIPTLPDGLLGLSHLVLPQQDNLIALEEHLHAQTDFLPSIEKTQKELVLSKPCKFEEKVSSEHFIQSHHGDLQALQQQLDTQKKAIRSIQEVQEELLLQRLSELEKRVSSEQVCSSSFVSQVPVADSERTQKSFPTKSNDTLPSSHREIPRLQDRLLSLSKPILPQQDNMTAQLDAQREVMYSYEKPQEELSLNKQRKLNKSESAEHTIPSLFLPKETEHSFIPLPFAEAKPKSTCELYSSQNEHAAPPSNPVIPGFQDRLLSFSQSVLTQQDNLGLQKQLDLQREVLHYSQKAQEKLLVQRQTALQQQIQKHEETLKDFFKDSQISKPTVENDLKTQKMGQLRDWFPNTQDLAGNDQENIRHADRNNSDDNHLASEDTSAKQSGEHLEKDLGRRSSKPPVAKVKCGLDLNQHELSAIQEVESPAIGRTSILGKPGIYEDRDPLRVSISREQSFFGSPLAHDPFSCLQLVGQENVCGDDYDEAVKLKESVVENHAVLSYAVEEEHAYLGPTVKPDDKAKTLSYEPLSSATVSTGSLLSYENTDLSLTDPESFSEHMDDSKQESTTSKEEETNIISSIVPSTQDIYQRQNSSDVHKSLLPAVDETTCGHTHFQQMIDKYINEANLIPEKTDLQELEHIFPNLHHQLFKPLEPHPDFDLSSSSSGISPDNRDFYQRSDSSSESHCATGLSKSTVYFTALRRTSMHSSLNTSPNQQPDTNLAHVGAHSFATENIIGGSEQCFEQLQPEYSSQEESQHADLPSIFSIEARDSSQGMKNQNYPSEEHTEILQNKKKIVHFQLSIGNLSSVYSSSDEANVFDQLNVQHSTPCGSNSSECSTKHQLESRKESMGFEELSKRGVVTMLQSQGLIEDNKNETCRVLDINPQVEETDSRLCVRTVEMGTSIQAPYSLTTQNEKYFENSAETDIPKITKKLSQLGESELFASSGSFSLQSSIPVWETETGHGIMEEPELTLISTTDTSIAEMDFANLTLEEKSENEAKCFFQVSEFLPLVSATEASDYPAVSELSIEKPRTASTETPRRLTPVPGSLQEAFIKRKKSFMERSHQRQKEIRNKIHVSENSQIKTVKEKPSISSSVSRLKGVNKVRASFPEDRKTTQALRHQRGLRLYNQLAEVKQQKEEKTKQEAYAQNRARAKEFHKKTLEKLRAKNTC.

The segment at Met1–Ile560 is necessary for centriole targeting and microtubule association. The residue at position 14 (Ser14) is a Phosphoserine. Coiled-coil stretches lie at residues Lys207–Ala273 and Ala500–Lys552. Phosphoserine is present on residues Ser654 and Ser938. Residues Pro1008–Leu1029 form a disordered region. The span at Lys1013–Lys1027 shows a compositional bias: basic and acidic residues. 2 coiled-coil regions span residues Leu1053–Leu1082 and Ile1498–Glu1544. The tract at residues Ala1558 to Arg1580 is disordered. A compositionally biased stretch (polar residues) spans Lys1565–Ser1577. Ser1637 carries the post-translational modification Phosphoserine. A coiled-coil region spans residues Gln1728–Gln1758. 3 stretches are compositionally biased toward basic and acidic residues: residues Arg1795–Arg1827, Phe1985–Glu2003, and Asp2100–Ser2112. Disordered stretches follow at residues Arg1795–Val1834, Leu1979–Thr2004, and His2085–Ala2117. The residue at position 2473 (Thr2473) is a Phosphothreonine. The segment at Ser2478–Cys2601 is ALMS motif. Residues Arg2556–Arg2581 adopt a coiled-coil conformation.

In terms of assembly, interacts (via ALMS motif) with microtubules; this interaction is direct.

It is found in the cytoplasm. The protein localises to the cytoskeleton. It localises to the microtubule organizing center. The protein resides in the centrosome. Its subcellular location is the centriole. It is found in the spindle. Functionally, centriole-enriched microtubule-binding protein involved in centriole biogenesis. Essential for the generation of the distal portion of new-born centrioles in a CPAP- and CEP120-mediated elongation dependent manner during the cell cycle S/G2 phase after formation of the initiating cartwheel structure. Required for the recruitment of centriolar proteins, such as POC1B, POC5 and CEP135, into the distal portion of centrioles. Also required for centriole-to-centrosome conversion during mitotic progression, but is dispensable for cartwheel removal or centriole disengagement. Binds to and stabilizes centriolar microtubule. May be involved in ciliogenesis. In Homo sapiens (Human), this protein is Centrosomal protein of 295 kDa.